Consider the following 69-residue polypeptide: DNA gyrase inhibitor YacG (69 aa).

4 residues coordinate Zn(2+): Cys7, Cys10, Cys26, and Cys30.

The protein belongs to the DNA gyrase inhibitor YacG family. As to quaternary structure, interacts with GyrB. The cofactor is Zn(2+).

Its function is as follows. Inhibits all the catalytic activities of DNA gyrase by preventing its interaction with DNA. Acts by binding directly to the C-terminal domain of GyrB, which probably disrupts DNA binding by the gyrase. The protein is DNA gyrase inhibitor YacG of Shewanella baltica (strain OS155 / ATCC BAA-1091).